The following is a 283-amino-acid chain: 4-diphosphocytidyl-2-C-methyl-D-erythritol kinase (283 aa).

The active site involves Lys-10. 99–109 (PMGGGLGGGSS) provides a ligand contact to ATP. Asp-141 is an active-site residue.

The protein belongs to the GHMP kinase family. IspE subfamily. Homodimer.

The enzyme catalyses 4-CDP-2-C-methyl-D-erythritol + ATP = 4-CDP-2-C-methyl-D-erythritol 2-phosphate + ADP + H(+). The protein operates within isoprenoid biosynthesis; isopentenyl diphosphate biosynthesis via DXP pathway; isopentenyl diphosphate from 1-deoxy-D-xylulose 5-phosphate: step 3/6. Catalyzes the phosphorylation of the position 2 hydroxy group of 4-diphosphocytidyl-2C-methyl-D-erythritol. This is 4-diphosphocytidyl-2-C-methyl-D-erythritol kinase from Salmonella choleraesuis (strain SC-B67).